We begin with the raw amino-acid sequence, 124 residues long: Fluoride-specific ion channel FluC (124 aa).

A run of 4 helical transmembrane segments spans residues 4–24, 32–52, 68–88, and 96–116; these read VIFIGIFGALGCLCRYYLSGW, AFPYGTFAVNIIGAFLIGLIM, GLTIGFLGGLTTFSTFSYETF, and LLIASVNVLTSVLVCLVFTWL. Na(+) contacts are provided by glycine 75 and threonine 78.

The protein belongs to the fluoride channel Fluc/FEX (TC 1.A.43) family.

Its subcellular location is the cell inner membrane. It catalyses the reaction fluoride(in) = fluoride(out). Na(+) is not transported, but it plays an essential structural role and its presence is essential for fluoride channel function. Fluoride-specific ion channel. Important for reducing fluoride concentration in the cell, thus reducing its toxicity. This is Fluoride-specific ion channel FluC from Geotalea daltonii (strain DSM 22248 / JCM 15807 / FRC-32) (Geobacter daltonii).